Reading from the N-terminus, the 299-residue chain is MSASEDVWRKDLKMIHGYPMIYAFALNWERIEEFQSTPGDIVITTYPKSGTTWLSEIVDMVLNDGNVEKCKRDVITSKVPMLELSVPGIRISGVELLKKTPSPRIIKTHLPIDLLPKSFWENKCKMIYLARNGKDVAVSYYHFDLMNSINPLPGTWEEYLEKFLAGNVAYGSWFDHVKSWWEKREEHPLLYLYYEELKQNPKKEIKKIASFLDKTLDEEALDRIVHHTSFEMMKENPLVNYTHLPTAMMDHSKSPFMRKGIVGDWKNYFTMTQTEQFDAVYKKKMSGTTLEFCTDIQSA.

48–53 contributes to the 3'-phosphoadenylyl sulfate binding site; sequence KSGTTW. Substrate is bound at residue 107–109; the sequence is KTH. H109 serves as the catalytic Proton acceptor. 3'-phosphoadenylyl sulfate-binding positions include R131, S139, Y194, 228-233, and 258-260; these read TSFEMM and RKG.

The protein belongs to the sulfotransferase 1 family. In terms of tissue distribution, liver specific.

It localises to the cytoplasm. The enzyme catalyses a phenol + 3'-phosphoadenylyl sulfate = an aryl sulfate + adenosine 3',5'-bisphosphate + H(+). It carries out the reaction 3,3',5-triiodo-L-thyronine + 3'-phosphoadenylyl sulfate = 3,3',5-triiodo-L-thyronine sulfate + adenosine 3',5'-bisphosphate + H(+). It catalyses the reaction 3,3',5'-triiodo-L-thyronine + 3'-phosphoadenylyl sulfate = 3,3',5'-triiodo-L-thyronine sulfate + adenosine 3',5'-bisphosphate + H(+). The catalysed reaction is 3,3'-diiodo-L-thyronine + 3'-phosphoadenylyl sulfate = 3,3'-diiodo-L-thyronine sulfate + adenosine 3',5'-bisphosphate + H(+). The enzyme catalyses dopamine + 3'-phosphoadenylyl sulfate = dopamine 3-O-sulfate + adenosine 3',5'-bisphosphate + H(+). It carries out the reaction dopamine + 3'-phosphoadenylyl sulfate = dopamine 4-O-sulfate + adenosine 3',5'-bisphosphate + H(+). It catalyses the reaction 4-ethylphenol + 3'-phosphoadenylyl sulfate = 4-ethylphenyl sulfate + adenosine 3',5'-bisphosphate + H(+). Functionally, sulfotransferase that utilizes 3'-phospho-5'-adenylyl sulfate (PAPS) as sulfonate donor to catalyze the sulfate conjugation of dopamine, small phenols such as 1-naphthol and p-nitrophenol and thyroid hormones, including 3,3'-diiodothyronine, triidothyronine (T3) and reverse triiodothyronine (rT3). May play a role in gut microbiota-host metabolic interaction. O-sulfonates 4-ethylphenol (4-EP), a dietary tyrosine-derived metabolite produced by gut bacteria. The product 4-EPS crosses the blood-brain barrier and may negatively regulate oligodendrocyte maturation and myelination, affecting the functional connectivity of different brain regions associated with the limbic system. The polypeptide is Sulfotransferase 1B1 (Mus musculus (Mouse)).